Reading from the N-terminus, the 392-residue chain is Succinyl-diaminopimelate desuccinylase (392 aa).

His78 provides a ligand contact to Zn(2+). Asp80 is a catalytic residue. Zn(2+) is bound at residue Asp110. Glu145 serves as the catalytic Proton acceptor. Glu146, Glu174, and His363 together coordinate Zn(2+).

This sequence belongs to the peptidase M20A family. DapE subfamily. As to quaternary structure, homodimer. The cofactor is Zn(2+). Co(2+) serves as cofactor.

The catalysed reaction is N-succinyl-(2S,6S)-2,6-diaminopimelate + H2O = (2S,6S)-2,6-diaminopimelate + succinate. Its pathway is amino-acid biosynthesis; L-lysine biosynthesis via DAP pathway; LL-2,6-diaminopimelate from (S)-tetrahydrodipicolinate (succinylase route): step 3/3. Functionally, catalyzes the hydrolysis of N-succinyl-L,L-diaminopimelic acid (SDAP), forming succinate and LL-2,6-diaminopimelate (DAP), an intermediate involved in the bacterial biosynthesis of lysine and meso-diaminopimelic acid, an essential component of bacterial cell walls. This chain is Succinyl-diaminopimelate desuccinylase, found in Methylobacterium radiotolerans (strain ATCC 27329 / DSM 1819 / JCM 2831 / NBRC 15690 / NCIMB 10815 / 0-1).